A 272-amino-acid chain; its full sequence is Cytochrome c oxidase subunit 3 (272 aa).

The next 7 helical transmembrane spans lie at 20 to 40 (PWPLVAALGGLSLTFGGVLFM), 45 to 65 (GGGELLCLGFFTILYVMFTWW), 89 to 109 (GMILFIVSEIMFFFAFFWAFF), 128 to 148 (VVAISPWGLPFLNTILLLSSG), 166 to 186 (AMQGLSVTLAFAIAFTAMQGF), 204 to 224 (FYMATGFHGFHVIIGTIFLFI), and 248 to 268 (YWHFVDVVWLFLFLTIYWWGF).

The protein belongs to the cytochrome c oxidase subunit 3 family. As to quaternary structure, component of the cytochrome c oxidase (complex IV, CIV), a multisubunit enzyme composed of a catalytic core of 3 subunits and several supernumerary subunits. The complex exists as a monomer or a dimer and forms supercomplexes (SCs) in the inner mitochondrial membrane with ubiquinol-cytochrome c oxidoreductase (cytochrome b-c1 complex, complex III, CIII).

The protein localises to the mitochondrion inner membrane. It catalyses the reaction 4 Fe(II)-[cytochrome c] + O2 + 8 H(+)(in) = 4 Fe(III)-[cytochrome c] + 2 H2O + 4 H(+)(out). Component of the cytochrome c oxidase, the last enzyme in the mitochondrial electron transport chain which drives oxidative phosphorylation. The respiratory chain contains 3 multisubunit complexes succinate dehydrogenase (complex II, CII), ubiquinol-cytochrome c oxidoreductase (cytochrome b-c1 complex, complex III, CIII) and cytochrome c oxidase (complex IV, CIV), that cooperate to transfer electrons derived from NADH and succinate to molecular oxygen, creating an electrochemical gradient over the inner membrane that drives transmembrane transport and the ATP synthase. Cytochrome c oxidase is the component of the respiratory chain that catalyzes the reduction of oxygen to water. Electrons originating from reduced cytochrome c in the intermembrane space (IMS) are transferred via the dinuclear copper A center (CU(A)) of subunit 2 and heme A of subunit 1 to the active site in subunit 1, a binuclear center (BNC) formed by heme A3 and copper B (CU(B)). The BNC reduces molecular oxygen to 2 water molecules using 4 electrons from cytochrome c in the IMS and 4 protons from the mitochondrial matrix. The protein is Cytochrome c oxidase subunit 3 (COX3) of Pylaiella littoralis (Seaweed).